A 105-amino-acid chain; its full sequence is Integration host factor subunit alpha (105 aa).

It belongs to the bacterial histone-like protein family. As to quaternary structure, heterodimer of an alpha and a beta chain.

In terms of biological role, this protein is one of the two subunits of integration host factor, a specific DNA-binding protein that functions in genetic recombination as well as in transcriptional and translational control. The protein is Integration host factor subunit alpha of Rhodospirillum rubrum (strain ATCC 11170 / ATH 1.1.1 / DSM 467 / LMG 4362 / NCIMB 8255 / S1).